Consider the following 606-residue polypeptide: Large subunit GTPase 1 homolog (606 aa).

Residues 1-21 (MGKKNKGGAPNLGRQLIKDRF) are disordered. Positions 165 to 395 (WRQLWRVVER…LCDCPGLVMP (231 aa)) constitute a CP-type G domain. 213–216 (NKSD) lines the GTP pocket. Residues Ser-276 and Ser-279 each carry the phosphoserine modification. GTP-binding positions include 344–351 (GYPNVGKS) and 388–391 (DCPG). Residues 574-606 (LVAGNDPAAKPWRHVKKERREKLRKKFSHLDEH) are disordered. A compositionally biased stretch (basic residues) spans 584-600 (PWRHVKKERREKLRKKF).

The protein belongs to the TRAFAC class YlqF/YawG GTPase family. LSG1 subfamily. Expressed in larval serotonergic neurons.

It localises to the cytoplasm. GTPase required for the nuclear export of the 60S ribosomal subunit. Probably acts by mediating the release of Nmd3 from the 60S ribosomal subunit after export into the cytoplasm. Regulator of body size; acts in serotonergic neurons to regulate insulin signaling and thus exerts global growth control. This Drosophila melanogaster (Fruit fly) protein is Large subunit GTPase 1 homolog (Ns3).